We begin with the raw amino-acid sequence, 314 residues long: Very long chain fatty acid elongase 4 (314 aa).

Asparagine 20 carries N-linked (GlcNAc...) asparagine glycosylation. Transmembrane regions (helical) follow at residues 42-62 (LMQS…FVWL), 78-98 (VLII…RELF), 127-147 (ALWW…FFIL), 165-185 (MFTL…FFGA), 188-208 (NSFI…GPWI), 217-237 (YLTM…ALSL), and 247-267 (MHWA…NFYI). The segment at 274–314 (KKPKTGKTAMNGISANGVSKSEKQLVIENGKKQKNGKAKGD) is disordered. The segment covering 293–304 (KSEKQLVIENGK) has biased composition (basic and acidic residues). The span at 305–314 (KQKNGKAKGD) shows a compositional bias: basic residues. The Di-lysine motif motif lies at 310–314 (KAKGD).

This sequence belongs to the ELO family. ELOVL4 subfamily. Oligomer. N-glycosylated. Expressed mainly in retina. Also expressed in skin and thymus.

It localises to the endoplasmic reticulum membrane. It catalyses the reaction a very-long-chain acyl-CoA + malonyl-CoA + H(+) = a very-long-chain 3-oxoacyl-CoA + CO2 + CoA. The catalysed reaction is hexacosanoyl-CoA + malonyl-CoA + H(+) = 3-oxooctacosanyol-CoA + CO2 + CoA. The enzyme catalyses octacosanoyl-CoA + malonyl-CoA + H(+) = 3-oxo-triacontanoyl-CoA + CO2 + CoA. It carries out the reaction triacontanoyl-CoA + malonyl-CoA + H(+) = 3-oxo-dotriacontanoyl-CoA + CO2 + CoA. It catalyses the reaction (19Z,22Z,25Z,28Z,31Z)-tetratriacontapentaenoyl-CoA + malonyl-CoA + H(+) = 3-oxo-(21Z,24Z,27Z,30Z,33Z)-hexatriacontapentaenoyl-CoA + CO2 + CoA. The catalysed reaction is (4Z,7Z,10Z,13Z,16Z,19Z)-docosahexaenoyl-CoA + malonyl-CoA + H(+) = 3-oxo-(6Z,9Z,12Z,15Z,18Z,21Z)-tetracosahexaenoyl-CoA + CO2 + CoA. The enzyme catalyses (7Z,10Z,13Z,16Z)-docosatetraenoyl-CoA + malonyl-CoA + H(+) = (9Z,12Z,15Z,18Z)-3-oxotetracosatetraenoyl-CoA + CO2 + CoA. It carries out the reaction (11Z,14Z,17Z,20Z,23Z)-hexacosapentaenoyl-CoA + malonyl-CoA + H(+) = 3-oxo-(13Z,16Z,19Z,22Z,25Z)-octacosapentaenoyl-CoA + CO2 + CoA. It catalyses the reaction (13Z,16Z,19Z,22Z,25Z)-octacosapentaenoyl-CoA + malonyl-CoA + H(+) = 3-oxo-(15Z,18Z,21Z,24Z,27Z)-triacontapentaenoyl-CoA + CO2 + CoA. The catalysed reaction is (15Z,18Z,21Z,24Z,27Z)-triacontapentaenoyl-CoA + malonyl-CoA + H(+) = 3-oxo-(17Z,20Z,23Z,26Z,29Z)-dotriacontapentaenoyl-CoA + CO2 + CoA. The enzyme catalyses (17Z,20Z,23Z,26Z,29Z)-dotriacontapentaenoyl-CoA + malonyl-CoA + H(+) = 3-oxo-(19Z,22Z,25Z,28Z,31Z)-tetratriacontapentaenoyl-CoA + CO2 + CoA. It carries out the reaction (21Z,24Z,27Z,30Z,33Z)-hexatriacontapentaenoyl-CoA + malonyl-CoA + H(+) = 3-oxo-(23Z,26Z,29Z,32Z,35Z)-octatriacontapentaenoyl-CoA + CO2 + CoA. It catalyses the reaction (11Z,14Z,17Z,20Z)-hexacosatetraenoyl-CoA + malonyl-CoA + H(+) = (13Z,16Z,19Z,22Z)-3-oxooctacosatetraenoyl-CoA + CO2 + CoA. The catalysed reaction is (13Z,16Z,19Z,22Z)-octacosatetraenoyl-CoA + malonyl-CoA + H(+) = 3-oxo-(15Z,18Z,21Z,24Z)-triacontatetraenoyl-CoA + CO2 + CoA. The enzyme catalyses (15Z,18Z,21Z,24Z)-triacontatetraenoyl-CoA + malonyl-CoA + H(+) = 3-oxo-(17Z,20Z,23Z,26Z)-dotriacontatetraenoyl-CoA + CO2 + CoA. It carries out the reaction (17Z,20Z,23Z,26Z)-dotriacontatetraenoyl-CoA + malonyl-CoA + H(+) = 3-oxo-(19Z,22Z,25Z,28Z)-tetratriacontatetraenoyl-CoA + CO2 + CoA. It catalyses the reaction (19Z,22Z,25Z,28Z)-tetratriacontatetraenoyl-CoA + malonyl-CoA + H(+) = 3-oxo-(21Z,24Z,27Z,30Z)-hexatriacontatetraenoyl-CoA + CO2 + CoA. The catalysed reaction is (21Z,24Z,27Z,30Z)-hexatriacontatetraenoyl-CoA + malonyl-CoA + H(+) = 3-oxo-(23Z,26Z,29Z,32Z)-octatriacontatetraenoyl-CoA + CO2 + CoA. The enzyme catalyses (6Z,9Z,12Z,15Z,18Z,21Z)-tetracosahexaenoyl-CoA + malonyl-CoA + H(+) = 3-oxo-(8Z,11Z,14Z,17Z,20Z,23Z)-hexacosahexaenoyl-CoA + CO2 + CoA. It carries out the reaction (8Z,11Z,14Z,17Z,20Z,23Z)-hexacosahexaenoyl-CoA + malonyl-CoA + H(+) = 3-oxo-(10Z,13Z,16Z,19Z,22Z,25Z)-octacosahexaenoyl-CoA + CO2 + CoA. It catalyses the reaction (10Z,13Z,16Z,19Z,22Z,25Z)-octacosahexaenoyl-CoA + malonyl-CoA + H(+) = 3-oxo-(12Z,15Z,18Z,21Z,24Z,27Z)-triacontahexaenoyl-CoA + CO2 + CoA. The catalysed reaction is (12Z,15Z,18Z,21Z,24Z,27Z)-triacontahexaenoyl-CoA + malonyl-CoA + H(+) = 3-oxo-(14Z,17Z,20Z,23Z,26Z,29Z)-dotriacontahexaenoyl-CoA + CO2 + CoA. The enzyme catalyses (14Z,17Z,20Z,23Z,26Z,29Z)-dotriacontahexaenoyl-CoA + malonyl-CoA + H(+) = 3-oxo-(16Z,19Z,22Z,25Z,28Z,31Z)-tetratriacontahexaenoyl-CoA + CO2 + CoA. It carries out the reaction (16Z,19Z,22Z,25Z,28Z,31Z)-tetratriacontahexaenoyl-CoA + malonyl-CoA + H(+) = 3-oxo-(18Z,21Z,24Z,27Z,30Z,33Z)-hexatriacontahexaenoyl-CoA + CO2 + CoA. It catalyses the reaction (9Z,12Z,15Z,18Z,21Z)-tetracosapentaenoyl-CoA + malonyl-CoA + H(+) = 3-oxo-(11Z,14Z,17Z,20Z,23Z)-hexacosapentaenoyl-CoA + CO2 + CoA. It functions in the pathway lipid metabolism; fatty acid biosynthesis. In terms of biological role, catalyzes the first and rate-limiting reaction of the four reactions that constitute the long-chain fatty acids elongation cycle. This endoplasmic reticulum-bound enzymatic process allows the addition of 2 carbons to the chain of long- and very long-chain fatty acids (VLCFAs) per cycle. Condensing enzyme that catalyzes the synthesis of very long chain saturated (VLC-SFA) and polyunsaturated (PUFA) fatty acids that are involved in multiple biological processes as precursors of membrane lipids and lipid mediators. May play a critical role in early brain and skin development. This is Very long chain fatty acid elongase 4 from Macaca fascicularis (Crab-eating macaque).